The primary structure comprises 383 residues: Putative glutamate--cysteine ligase 2 (383 aa).

This sequence belongs to the glutamate--cysteine ligase type 2 family. YbdK subfamily.

It carries out the reaction L-cysteine + L-glutamate + ATP = gamma-L-glutamyl-L-cysteine + ADP + phosphate + H(+). Functionally, ATP-dependent carboxylate-amine ligase which exhibits weak glutamate--cysteine ligase activity. In Clavibacter sepedonicus (Clavibacter michiganensis subsp. sepedonicus), this protein is Putative glutamate--cysteine ligase 2.